Consider the following 117-residue polypeptide: Nitrogen regulatory protein GlnK1 (117 aa).

Residues Thr-32, 40–42, and 92–95 contribute to the ADP site; these read GAQ and GSGK. ATP is bound by residues Thr-32, 40-42, and 92-95; these read GAQ and GSGK.

The protein belongs to the P(II) protein family. Homotrimer. Interacts and forms stable complexes with the glutamine synthetase GlnA1.

The protein resides in the cytoplasm. Inhibitory effects on GlnA1 are abolished in the presence of the effector 2-oxoglutarate. Its function is as follows. Involved in the regulation of nitrogen metabolism. Regulates the activity of its targets by protein-protein interaction in response to the nitrogen status of the cell. Allows finetuning control of the glutamine synthetase GlnA1 under changing nitrogen availabilities via direct protein interaction. This chain is Nitrogen regulatory protein GlnK1, found in Methanosarcina mazei (strain ATCC BAA-159 / DSM 3647 / Goe1 / Go1 / JCM 11833 / OCM 88) (Methanosarcina frisia).